The chain runs to 282 residues: Phosphatidylserine decarboxylase proenzyme (282 aa).

Residues Asp-88, His-144, and Ser-247 each act as charge relay system; for autoendoproteolytic cleavage activity in the active site. Catalysis depends on Ser-247, which acts as the Schiff-base intermediate with substrate; via pyruvic acid; for decarboxylase activity. Ser-247 is subject to Pyruvic acid (Ser); by autocatalysis.

The protein belongs to the phosphatidylserine decarboxylase family. PSD-B subfamily. Prokaryotic type I sub-subfamily. As to quaternary structure, heterodimer of a large membrane-associated beta subunit and a small pyruvoyl-containing alpha subunit. Pyruvate serves as cofactor. Post-translationally, is synthesized initially as an inactive proenzyme. Formation of the active enzyme involves a self-maturation process in which the active site pyruvoyl group is generated from an internal serine residue via an autocatalytic post-translational modification. Two non-identical subunits are generated from the proenzyme in this reaction, and the pyruvate is formed at the N-terminus of the alpha chain, which is derived from the carboxyl end of the proenzyme. The autoendoproteolytic cleavage occurs by a canonical serine protease mechanism, in which the side chain hydroxyl group of the serine supplies its oxygen atom to form the C-terminus of the beta chain, while the remainder of the serine residue undergoes an oxidative deamination to produce ammonia and the pyruvoyl prosthetic group on the alpha chain. During this reaction, the Ser that is part of the protease active site of the proenzyme becomes the pyruvoyl prosthetic group, which constitutes an essential element of the active site of the mature decarboxylase.

It is found in the cell membrane. The catalysed reaction is a 1,2-diacyl-sn-glycero-3-phospho-L-serine + H(+) = a 1,2-diacyl-sn-glycero-3-phosphoethanolamine + CO2. Its pathway is phospholipid metabolism; phosphatidylethanolamine biosynthesis; phosphatidylethanolamine from CDP-diacylglycerol: step 2/2. Functionally, catalyzes the formation of phosphatidylethanolamine (PtdEtn) from phosphatidylserine (PtdSer). This is Phosphatidylserine decarboxylase proenzyme from Xanthomonas oryzae pv. oryzae (strain MAFF 311018).